The sequence spans 150 residues: MKVLLTKEVKGLGKAGEIHEVKDGYGRNFLVGKGMAEIATNEVINRWKAEQKRRAEKEAQELERLKNVAKELASVTLKIVQKVGANGSLYGAITKEDLSAALMAQKGIEVDKKSFELKTPIKSTGIYEIEVKLGHGIHAELKIDVEGSNV.

Belongs to the bacterial ribosomal protein bL9 family.

Its function is as follows. Binds to the 23S rRNA. This Wolinella succinogenes (strain ATCC 29543 / DSM 1740 / CCUG 13145 / JCM 31913 / LMG 7466 / NCTC 11488 / FDC 602W) (Vibrio succinogenes) protein is Large ribosomal subunit protein bL9.